The sequence spans 214 residues: MCQEDEYDYLFKTVLIGDSGVGKSNLLMRFTRNEFNIESKSTIGVEFATRNIVLDNKKIKAQIWDTAGQERYRAITSAYYRGAVGALIVYDITKQSSFDNVGRWLKELREHADSNIVIMLVGNKTDLLHLRAVSTEEAQAFAAENNLSFIETSAMDASNVEEAFQTVLTEIFRIVSNRSLEAGDDGVHPTAGQTLNIAPTMNDLNKKKSSSQCC.

Residue 17 to 24 (GDSGVGKS) coordinates GTP. Residues 39-47 (SKSTIGVEF) carry the Effector region motif. Position 42 is a phosphothreonine (threonine 42). GTP is bound by residues 65-69 (DTAGQ) and 123-126 (NKTD). S-geranylgeranyl cysteine attachment occurs at residues cysteine 213 and cysteine 214.

This sequence belongs to the small GTPase superfamily. Rab family.

The protein resides in the cell membrane. It localises to the endosome membrane. Its subcellular location is the golgi apparatus membrane. The protein localises to the cytoplasm. It is found in the nucleus. In terms of biological role, has a role in retrograde traffricking of proteins from the endosome to the Golgi. Involved in the secretory pathway where it has a role in acid phosphatase secretion. In Schizosaccharomyces pombe (strain 972 / ATCC 24843) (Fission yeast), this protein is GTP-binding protein ypt3 (ypt3).